Here is a 508-residue protein sequence, read N- to C-terminus: Photosystem II CP47 reaction center protein (508 aa).

6 helical membrane-spanning segments follow: residues 21-36 (SVHI…WAGS), 101-115 (IVFS…IWHW), 140-156 (GIHL…FGAF), 203-218 (IAAG…FHLS), 237-252 (VLSS…AFVV), and 457-472 (SFAL…HGAR).

Belongs to the PsbB/PsbC family. PsbB subfamily. In terms of assembly, PSII is composed of 1 copy each of membrane proteins PsbA, PsbB, PsbC, PsbD, PsbE, PsbF, PsbH, PsbI, PsbJ, PsbK, PsbL, PsbM, PsbT, PsbX, PsbY, PsbZ, Psb30/Ycf12, at least 3 peripheral proteins of the oxygen-evolving complex and a large number of cofactors. It forms dimeric complexes. Binds multiple chlorophylls. PSII binds additional chlorophylls, carotenoids and specific lipids. serves as cofactor.

The protein resides in the plastid. Its subcellular location is the chloroplast thylakoid membrane. In terms of biological role, one of the components of the core complex of photosystem II (PSII). It binds chlorophyll and helps catalyze the primary light-induced photochemical processes of PSII. PSII is a light-driven water:plastoquinone oxidoreductase, using light energy to abstract electrons from H(2)O, generating O(2) and a proton gradient subsequently used for ATP formation. The chain is Photosystem II CP47 reaction center protein from Platanus occidentalis (Sycamore).